Reading from the N-terminus, the 259-residue chain is Adenosylcobinamide-GDP ribazoletransferase (259 aa).

7 helical membrane-spanning segments follow: residues 36–56 (FSPL…ILLL), 65–85 (MPFI…VDGL), 108–128 (IGAS…AALF), 133–153 (LILF…IWAI), 175–195 (GFLI…FILI), 201–221 (IIST…ALII), and 238–258 (GASV…ILPA).

This sequence belongs to the CobS family. The cofactor is Mg(2+).

It is found in the cell inner membrane. The catalysed reaction is alpha-ribazole + adenosylcob(III)inamide-GDP = adenosylcob(III)alamin + GMP + H(+). The enzyme catalyses alpha-ribazole 5'-phosphate + adenosylcob(III)inamide-GDP = adenosylcob(III)alamin 5'-phosphate + GMP + H(+). It functions in the pathway cofactor biosynthesis; adenosylcobalamin biosynthesis; adenosylcobalamin from cob(II)yrinate a,c-diamide: step 7/7. Joins adenosylcobinamide-GDP and alpha-ribazole to generate adenosylcobalamin (Ado-cobalamin). Also synthesizes adenosylcobalamin 5'-phosphate from adenosylcobinamide-GDP and alpha-ribazole 5'-phosphate. The sequence is that of Adenosylcobinamide-GDP ribazoletransferase from Prochlorococcus marinus (strain SARG / CCMP1375 / SS120).